A 1161-amino-acid chain; its full sequence is BMP-2-inducible protein kinase (1161 aa).

The segment at 1–20 is disordered; sequence MKKFSRMPKSEGGSGGGAAG. At serine 14 the chain carries Phosphoserine. The Protein kinase domain occupies 51–316; that stretch reads VTLEESLAEG…DIFQVSYFAF (266 aa). Residues 57 to 65 and lysine 79 each bind ATP; that span reads LAEGGFSTV. The Proton acceptor role is filled by aspartate 180. Disordered stretches follow at residues 358–439, 453–495, 610–630, and 655–832; these read TDTI…RVLQ, LQHR…HHHL, TNQK…FGED, and ERAS…TQDL. A compositionally biased stretch (polar residues) spans 361–394; it reads IGPTETSIAPRQRPKANSATTATPSVLTIQSSAT. Low complexity-rich tracts occupy residues 422–439 and 460–485; these read LLGQ…RVLQ and QQQQ…QQQQ. Residues 610 to 619 are compositionally biased toward polar residues; the sequence is TNQKNISNPP. Serine 689 carries the post-translational modification Phosphoserine. Composition is skewed to polar residues over residues 697–718 and 726–735; these read SSIN…SPAS and KTSVQGQVQK. The residue at position 742 (serine 742) is a Phosphoserine. Acidic residues predominate over residues 755–779; the sequence is EEEEQDDEEVLQGEQGDFNDDDTEP. Residues 798 to 813 show a composition bias toward basic and acidic residues; sequence EKHSSDSDYEQAKAKY. Residues serine 817 and serine 818 each carry the phosphoserine modification. Threonine 834 is subject to Phosphothreonine. Phosphoserine is present on serine 928. The tract at residues 965-1035 is disordered; sequence SQQQKVKQRS…RRDSQSSNEF (71 aa). Residues 970–984 show a composition bias toward basic residues; sequence VKQRSLQKLSSRQRR. A compositionally biased stretch (low complexity) spans 1000-1011; that stretch reads TPTSTKKTLKPT. 8 positions are modified to phosphoserine: serine 1029, serine 1031, serine 1032, serine 1039, serine 1041, serine 1076, serine 1107, and serine 1111. Residues 1137–1146 show a composition bias toward polar residues; it reads TPHQSQQSQP. Residues 1137–1161 form a disordered region; sequence TPHQSQQSQPVELDPFGAAPFPSKQ.

Belongs to the protein kinase superfamily. Ser/Thr protein kinase family. Post-translationally, autophosphorylated.

The protein localises to the nucleus. It catalyses the reaction L-seryl-[protein] + ATP = O-phospho-L-seryl-[protein] + ADP + H(+). The enzyme catalyses L-threonyl-[protein] + ATP = O-phospho-L-threonyl-[protein] + ADP + H(+). In terms of biological role, may be involved in osteoblast differentiation. This Homo sapiens (Human) protein is BMP-2-inducible protein kinase (BMP2K).